A 444-amino-acid chain; its full sequence is Na(+)/H(+) antiporter NhaA (444 aa).

11 helical membrane passes run 27–47 (TTGL…NSPL), 72–92 (IHHW…GLEI), 108–128 (MLPI…YYAI), 136–156 (AGWG…LVLL), 167–187 (FLVA…ALFY), 190–210 (EINM…VSFN), 212–232 (FGIH…LFML), 312–332 (HLPV…GVSI), 349–369 (VMAG…YLAI), 385–405 (VFGV…IAEL), and 419–439 (IGIL…LRFI).

This sequence belongs to the NhaA Na(+)/H(+) (TC 2.A.33) antiporter family.

Its subcellular location is the cell inner membrane. It catalyses the reaction Na(+)(in) + 2 H(+)(out) = Na(+)(out) + 2 H(+)(in). Functionally, na(+)/H(+) antiporter that extrudes sodium in exchange for external protons. This Sulfurimonas denitrificans (strain ATCC 33889 / DSM 1251) (Thiomicrospira denitrificans (strain ATCC 33889 / DSM 1251)) protein is Na(+)/H(+) antiporter NhaA.